The sequence spans 269 residues: Staphylococcal secretory antigen ssaA2 (269 aa).

The first 27 residues, 1–27 (MKKIATATIATAGFATIAIASGNQAHA), serve as a signal peptide directing secretion. Repeat copies occupy residues 83-85 (YNN), 88-90 (YNN), 91-93 (YNN), 97-99 (YNN), 103-105 (YNN), 106-108 (YSN), and 115-117 (YNN). The 7 X 3 AA repeats of Y-[NS]-N stretch occupies residues 83 to 115 (YNNYSYNNYNNGYSYNNYSRYNNYSNNNQSYNY). In terms of domain architecture, Peptidase C51 spans 148 to 269 (MAPSSNGRSI…SQAAGYNFIH (122 aa)).

Its subcellular location is the secreted. Its function is as follows. Not known; immunogenic protein. This Staphylococcus aureus (strain MRSA252) protein is Staphylococcal secretory antigen ssaA2 (ssaA2).